Reading from the N-terminus, the 870-residue chain is Rho GTPase-activating protein 7 (870 aa).

Residues T18–A125 form the PH domain. Positions L167–F367 constitute a Rho-GAP domain. Disordered regions lie at residues S378–T432 and D446–R465. Over residues N407–N417 the composition is skewed to acidic residues. Residues G569–H693 adopt a coiled-coil conformation. The disordered stretch occupies residues H736–I793. Residues K777 to V787 are compositionally biased toward basic and acidic residues.

Functionally, acts as a GTPase activator for the Rac-type GTPase by converting it to an inactive GDP-bound state. The protein is Rho GTPase-activating protein 7 (ROPGAP7) of Arabidopsis thaliana (Mouse-ear cress).